A 63-amino-acid polypeptide reads, in one-letter code: Transmembrane protein ZNF593OS (63 aa).

A helical transmembrane segment spans residues 30–50 (LAGVVATVLAVLGLGGSCYAV).

The protein resides in the membrane. The protein is Transmembrane protein ZNF593OS of Homo sapiens (Human).